The chain runs to 135 residues: Large ribosomal subunit protein uL16c (135 aa).

It belongs to the universal ribosomal protein uL16 family. In terms of assembly, part of the 50S ribosomal subunit.

The protein localises to the plastid. It localises to the chloroplast. The polypeptide is Large ribosomal subunit protein uL16c (Piper cenocladum (Ant piper)).